We begin with the raw amino-acid sequence, 416 residues long: Serine hydroxymethyltransferase (416 aa).

(6S)-5,6,7,8-tetrahydrofolate-binding positions include leucine 121 and 125–127 (GHL). The residue at position 229 (lysine 229) is an N6-(pyridoxal phosphate)lysine. Residues glutamate 245 and 354–356 (SPF) each bind (6S)-5,6,7,8-tetrahydrofolate.

Belongs to the SHMT family. Homodimer. Pyridoxal 5'-phosphate serves as cofactor.

Its subcellular location is the cytoplasm. The enzyme catalyses (6R)-5,10-methylene-5,6,7,8-tetrahydrofolate + glycine + H2O = (6S)-5,6,7,8-tetrahydrofolate + L-serine. The protein operates within one-carbon metabolism; tetrahydrofolate interconversion. It participates in amino-acid biosynthesis; glycine biosynthesis; glycine from L-serine: step 1/1. In terms of biological role, catalyzes the reversible interconversion of serine and glycine with tetrahydrofolate (THF) serving as the one-carbon carrier. This reaction serves as the major source of one-carbon groups required for the biosynthesis of purines, thymidylate, methionine, and other important biomolecules. Also exhibits THF-independent aldolase activity toward beta-hydroxyamino acids, producing glycine and aldehydes, via a retro-aldol mechanism. This chain is Serine hydroxymethyltransferase, found in Aliivibrio fischeri (strain ATCC 700601 / ES114) (Vibrio fischeri).